Consider the following 95-residue polypeptide: Small ribosomal subunit protein bS6 (95 aa).

This sequence belongs to the bacterial ribosomal protein bS6 family.

Functionally, binds together with bS18 to 16S ribosomal RNA. The polypeptide is Small ribosomal subunit protein bS6 (Shouchella clausii (strain KSM-K16) (Alkalihalobacillus clausii)).